The sequence spans 92 residues: MHESPILSNGDQPNRWAGLNRRVAALLLALIGFYRTFISPLLGPRCRFTPTCSAYGLEAIQRHGPWRGGWLTLKRVLRCHPFTPCGCDPVPD.

The protein belongs to the UPF0161 family.

The protein resides in the cell inner membrane. In terms of biological role, could be involved in insertion of integral membrane proteins into the membrane. The chain is Putative membrane protein insertion efficiency factor from Synechococcus sp. (strain CC9902).